We begin with the raw amino-acid sequence, 448 residues long: D-inositol 3-phosphate glycosyltransferase (448 aa).

1D-myo-inositol 3-phosphate is bound by residues His-35, 46–51 (DAGGLN), Lys-104, Tyr-137, Thr-161, and Arg-181. Gly-49 provides a ligand contact to UDP-N-acetyl-alpha-D-glucosamine. Positions 255, 260, and 321 each coordinate UDP-N-acetyl-alpha-D-glucosamine. Positions 330, 331, and 333 each coordinate Mg(2+). UDP-N-acetyl-alpha-D-glucosamine-binding residues include Glu-343 and Glu-351. Thr-357 lines the Mg(2+) pocket.

This sequence belongs to the glycosyltransferase group 1 family. MshA subfamily. In terms of assembly, homodimer.

It carries out the reaction 1D-myo-inositol 3-phosphate + UDP-N-acetyl-alpha-D-glucosamine = 1D-myo-inositol 2-acetamido-2-deoxy-alpha-D-glucopyranoside 3-phosphate + UDP + H(+). Functionally, catalyzes the transfer of a N-acetyl-glucosamine moiety to 1D-myo-inositol 3-phosphate to produce 1D-myo-inositol 2-acetamido-2-deoxy-glucopyranoside 3-phosphate in the mycothiol biosynthesis pathway. The chain is D-inositol 3-phosphate glycosyltransferase from Acidothermus cellulolyticus (strain ATCC 43068 / DSM 8971 / 11B).